Consider the following 467-residue polypeptide: Siroheme synthase 2 (467 aa).

Positions 1–204 are precorrin-2 dehydrogenase /sirohydrochlorin ferrochelatase; sequence MDYLPIFCQL…NDVALAERQI (204 aa). NAD(+) contacts are provided by residues 22 to 23 and 43 to 44; these read EI and CS. Residue serine 128 is modified to Phosphoserine. The uroporphyrinogen-III C-methyltransferase stretch occupies residues 216 to 467; that stretch reads GEVVLVGAGP…EPSQPLAQMA (252 aa). Proline 225 is an S-adenosyl-L-methionine binding site. Aspartate 248 serves as the catalytic Proton acceptor. Lysine 270 functions as the Proton donor in the catalytic mechanism. S-adenosyl-L-methionine contacts are provided by residues 301 to 303, isoleucine 306, 331 to 332, methionine 382, and glycine 411; these read GGD and TA.

The protein in the N-terminal section; belongs to the precorrin-2 dehydrogenase / sirohydrochlorin ferrochelatase family. This sequence in the C-terminal section; belongs to the precorrin methyltransferase family.

It catalyses the reaction uroporphyrinogen III + 2 S-adenosyl-L-methionine = precorrin-2 + 2 S-adenosyl-L-homocysteine + H(+). It carries out the reaction precorrin-2 + NAD(+) = sirohydrochlorin + NADH + 2 H(+). The catalysed reaction is siroheme + 2 H(+) = sirohydrochlorin + Fe(2+). It functions in the pathway cofactor biosynthesis; adenosylcobalamin biosynthesis; precorrin-2 from uroporphyrinogen III: step 1/1. Its pathway is cofactor biosynthesis; adenosylcobalamin biosynthesis; sirohydrochlorin from precorrin-2: step 1/1. It participates in porphyrin-containing compound metabolism; siroheme biosynthesis; precorrin-2 from uroporphyrinogen III: step 1/1. The protein operates within porphyrin-containing compound metabolism; siroheme biosynthesis; siroheme from sirohydrochlorin: step 1/1. It functions in the pathway porphyrin-containing compound metabolism; siroheme biosynthesis; sirohydrochlorin from precorrin-2: step 1/1. Multifunctional enzyme that catalyzes the SAM-dependent methylations of uroporphyrinogen III at position C-2 and C-7 to form precorrin-2 via precorrin-1. Then it catalyzes the NAD-dependent ring dehydrogenation of precorrin-2 to yield sirohydrochlorin. Finally, it catalyzes the ferrochelation of sirohydrochlorin to yield siroheme. This chain is Siroheme synthase 2, found in Serratia proteamaculans (strain 568).